The chain runs to 384 residues: Dual-specificity RNA methyltransferase RlmN (384 aa).

Residue Glu93 is the Proton acceptor of the active site. The region spanning 99–339 (EETRGTLCVS…TTIRKTRGDD (241 aa)) is the Radical SAM core domain. Residues Cys106 and Cys344 are joined by a disulfide bond. Cys113, Cys117, and Cys120 together coordinate [4Fe-4S] cluster. Residues 170–171 (GE), Ser202, 224–226 (SLH), and Asn301 contribute to the S-adenosyl-L-methionine site. Cys344 serves as the catalytic S-methylcysteine intermediate.

Belongs to the radical SAM superfamily. RlmN family. Requires [4Fe-4S] cluster as cofactor.

Its subcellular location is the cytoplasm. The catalysed reaction is adenosine(2503) in 23S rRNA + 2 reduced [2Fe-2S]-[ferredoxin] + 2 S-adenosyl-L-methionine = 2-methyladenosine(2503) in 23S rRNA + 5'-deoxyadenosine + L-methionine + 2 oxidized [2Fe-2S]-[ferredoxin] + S-adenosyl-L-homocysteine. It catalyses the reaction adenosine(37) in tRNA + 2 reduced [2Fe-2S]-[ferredoxin] + 2 S-adenosyl-L-methionine = 2-methyladenosine(37) in tRNA + 5'-deoxyadenosine + L-methionine + 2 oxidized [2Fe-2S]-[ferredoxin] + S-adenosyl-L-homocysteine. Functionally, specifically methylates position 2 of adenine 2503 in 23S rRNA and position 2 of adenine 37 in tRNAs. m2A2503 modification seems to play a crucial role in the proofreading step occurring at the peptidyl transferase center and thus would serve to optimize ribosomal fidelity. This Cupriavidus pinatubonensis (strain JMP 134 / LMG 1197) (Cupriavidus necator (strain JMP 134)) protein is Dual-specificity RNA methyltransferase RlmN.